A 314-amino-acid chain; its full sequence is Methionyl-tRNA formyltransferase (314 aa).

113–116 (SLLP) contributes to the (6S)-5,6,7,8-tetrahydrofolate binding site.

Belongs to the Fmt family.

The catalysed reaction is L-methionyl-tRNA(fMet) + (6R)-10-formyltetrahydrofolate = N-formyl-L-methionyl-tRNA(fMet) + (6S)-5,6,7,8-tetrahydrofolate + H(+). Attaches a formyl group to the free amino group of methionyl-tRNA(fMet). The formyl group appears to play a dual role in the initiator identity of N-formylmethionyl-tRNA by promoting its recognition by IF2 and preventing the misappropriation of this tRNA by the elongation apparatus. This Pseudomonas aeruginosa (strain ATCC 15692 / DSM 22644 / CIP 104116 / JCM 14847 / LMG 12228 / 1C / PRS 101 / PAO1) protein is Methionyl-tRNA formyltransferase.